The primary structure comprises 1120 residues: Transcription-repair-coupling factor (1120 aa).

Residues 591 to 756 (DLTNGMLMDR…LTGLKELSII (166 aa)) enclose the Helicase ATP-binding domain. An ATP-binding site is contributed by 604 to 611 (GDVGFGKT). Positions 709-712 (DEEQ) match the DEEQ box motif. Residues 777–933 (IIRDALLREH…TIASHDADLR (157 aa)) enclose the Helicase C-terminal domain.

It in the N-terminal section; belongs to the UvrB family. This sequence in the C-terminal section; belongs to the helicase family. RecG subfamily.

Its subcellular location is the cytoplasm. Couples transcription and DNA repair by recognizing RNA polymerase (RNAP) stalled at DNA lesions. Mediates ATP-dependent release of RNAP and its truncated transcript from the DNA, and recruitment of nucleotide excision repair machinery to the damaged site. The protein is Transcription-repair-coupling factor of Rickettsia typhi (strain ATCC VR-144 / Wilmington).